Reading from the N-terminus, the 149-residue chain is Ribonuclease pancreatic alpha-type (149 aa).

A signal peptide spans 1–25 (MGLEKSFILFSLLVLVLGWVQPSLG). 2 residues coordinate substrate: Lys32 and Arg35. Residue His37 is the Proton acceptor of the active site. 4 cysteine pairs are disulfide-bonded: Cys51–Cys109, Cys65–Cys120, Cys83–Cys135, and Cys90–Cys97. Substrate is bound by residues 66–70 (KPVNT), Lys91, and Arg110. The active-site Proton donor is His144.

The protein belongs to the pancreatic ribonuclease family. As to quaternary structure, monomer.

It is found in the secreted. The enzyme catalyses an [RNA] containing cytidine + H2O = an [RNA]-3'-cytidine-3'-phosphate + a 5'-hydroxy-ribonucleotide-3'-[RNA].. It catalyses the reaction an [RNA] containing uridine + H2O = an [RNA]-3'-uridine-3'-phosphate + a 5'-hydroxy-ribonucleotide-3'-[RNA].. In terms of biological role, endonuclease that catalyzes the cleavage of RNA on the 3' side of pyrimidine nucleotides. Acts on single-stranded and double-stranded RNA. The chain is Ribonuclease pancreatic alpha-type from Rattus fuscipes (Bush rat).